The chain runs to 397 residues: Decapping and exoribonuclease protein (397 aa).

Residues Arg-58, Glu-101, and 131–133 contribute to the substrate site; that span reads WRG. Glu-192 lines the Mg(2+) pocket. Substrate contacts are provided by Cys-217 and Glu-234. Residues Glu-234, Asp-236, Glu-253, and Leu-254 each coordinate Mg(2+). Residues Lys-255 and Gln-280 each contribute to the substrate site. The residue at position 392 (Thr-392) is a Phosphothreonine. Ser-394 is modified (phosphoserine).

It belongs to the DXO/Dom3Z family. Mg(2+) is required as a cofactor.

Its subcellular location is the nucleus. The enzyme catalyses a 5'-end triphospho-ribonucleoside in mRNA + H2O = a 5'-end phospho-ribonucleoside in mRNA + diphosphate + H(+). The catalysed reaction is a 5'-end NAD(+)-phospho-ribonucleoside in mRNA + H2O = a 5'-end phospho-ribonucleoside in mRNA + NAD(+) + H(+). It catalyses the reaction a 5'-end NAD(+)-phospho-ribonucleoside in snoRNA + H2O = a 5'-end phospho-ribonucleoside in snoRNA + NAD(+) + H(+). It carries out the reaction a 5'-end (N(7)-methyl 5'-triphosphoguanosine)-ribonucleoside-ribonucleotide in mRNA + H2O = a (N(7)-methyl 5'-triphosphoguanosine)-nucleoside + a 5'-end phospho-ribonucleoside in mRNA + H(+). The enzyme catalyses a 5'-end FAD-phospho-ribonucleoside in mRNA + H2O = a 5'-end phospho-ribonucleoside in mRNA + FAD + H(+). The catalysed reaction is a 5'-end CoA-ribonucleoside in mRNA + H2O = 3'-dephospho-CoA + a 5'-end phospho-ribonucleoside in mRNA + H(+). Decapping enzyme for NAD-capped RNAs: specifically hydrolyzes the nicotinamide adenine dinucleotide (NAD) cap from a subset of RNAs by removing the entire NAD moiety from the 5'-end of an NAD-capped RNA. The NAD-cap is present at the 5'-end of some RNAs and snoRNAs. In contrast to the canonical 5'-end N7 methylguanosine (m7G) cap, the NAD cap promotes mRNA decay. Preferentially acts on NAD-capped transcripts in response to environmental stress. Also acts as a non-canonical decapping enzyme that removes the entire cap structure of m7G capped or incompletely capped RNAs and mediates their subsequent degradation. Specifically degrades pre-mRNAs with a defective 5'-end m7G cap and is part of a pre-mRNA capping quality control. Has decapping activity toward incomplete 5'-end m7G cap mRNAs such as unmethylated 5'-end-capped RNA (cap0), while it has no activity toward 2'-O-ribose methylated m7G cap (cap1). In contrast to canonical decapping enzymes DCP2 and NUDT16, which cleave the cap within the triphosphate linkage, the decapping activity releases the entire cap structure GpppN and a 5'-end monophosphate RNA. Also has 5'-3' exoribonuclease activities: The 5'-end monophosphate RNA is then degraded by the 5'-3' exoribonuclease activity, enabling this enzyme to decap and degrade incompletely capped mRNAs. Also possesses RNA 5'-pyrophosphohydrolase activity by hydrolyzing the 5'-end triphosphate to release pyrophosphates. Exhibits decapping activity towards FAD-capped RNAs. Exhibits decapping activity towards dpCoA-capped RNAs in vitro. This is Decapping and exoribonuclease protein from Rattus norvegicus (Rat).